Here is a 173-residue protein sequence, read N- to C-terminus: Ribulose bisphosphate carboxylase small subunit, chloroplastic 1 (173 aa).

A chloroplast-targeting transit peptide spans 1–49; the sequence is MASIPATVATVAQANMVAPFTGLKANAAFPVTKKVNDFSTLPSNGGRVQ.

It belongs to the RuBisCO small chain family. Heterohexadecamer of 8 large and 8 small subunits.

It is found in the plastid. The protein resides in the chloroplast. In terms of biological role, ruBisCO catalyzes two reactions: the carboxylation of D-ribulose 1,5-bisphosphate, the primary event in carbon dioxide fixation, as well as the oxidative fragmentation of the pentose substrate. Both reactions occur simultaneously and in competition at the same active site. Although the small subunit is not catalytic it is essential for maximal activity. In Flaveria pringlei, this protein is Ribulose bisphosphate carboxylase small subunit, chloroplastic 1.